The primary structure comprises 200 residues: GTP cyclohydrolase-2 (200 aa).

50–54 (RVHSE) is a GTP binding site. 3 residues coordinate Zn(2+): C55, C66, and C68. GTP-binding positions include Q71, 93–95 (EGR), and T115. The active-site Proton acceptor is D127. The Nucleophile role is filled by R129. 2 residues coordinate GTP: T150 and K155.

It belongs to the GTP cyclohydrolase II family. Requires Zn(2+) as cofactor.

It carries out the reaction GTP + 4 H2O = 2,5-diamino-6-hydroxy-4-(5-phosphoribosylamino)-pyrimidine + formate + 2 phosphate + 3 H(+). It functions in the pathway cofactor biosynthesis; riboflavin biosynthesis; 5-amino-6-(D-ribitylamino)uracil from GTP: step 1/4. Catalyzes the conversion of GTP to 2,5-diamino-6-ribosylamino-4(3H)-pyrimidinone 5'-phosphate (DARP), formate and pyrophosphate. This chain is GTP cyclohydrolase-2, found in Acinetobacter baumannii (strain AB0057).